The sequence spans 281 residues: Endonuclease III-like protein 1 (281 aa).

The transit peptide at 1-17 (MCAAAPRGGGRAARRLG) directs the protein to the mitochondrion. The segment at 1–60 (MCAAAPRGGGRAARRLGAATAGSRVPSAAPRYSRRTRRVPIAYEAEPKPESPGPKWEPEN) is disordered. A compositionally biased stretch (low complexity) spans 15–24 (RLGAATAGSR). The 25-residue stretch at 168 to 192 (KYGGDIPGTVEELVKLPGVGPKMAH) folds into the HhH domain. Catalysis depends on lysine 189, which acts as the Nucleophile; for N-glycosylase activity. The [4Fe-4S] cluster site is built by cysteine 259, cysteine 266, cysteine 269, and cysteine 275.

The protein belongs to the Nth/MutY family. [4Fe-4S] cluster serves as cofactor.

Its subcellular location is the nucleus. The protein localises to the mitochondrion. The catalysed reaction is 2'-deoxyribonucleotide-(2'-deoxyribose 5'-phosphate)-2'-deoxyribonucleotide-DNA = a 3'-end 2'-deoxyribonucleotide-(2,3-dehydro-2,3-deoxyribose 5'-phosphate)-DNA + a 5'-end 5'-phospho-2'-deoxyribonucleoside-DNA + H(+). Functionally, bifunctional DNA N-glycosylase with associated apurinic/apyrimidinic (AP) lyase function that catalyzes the first step in base excision repair (BER), the primary repair pathway for the repair of oxidative DNA damage. The DNA N-glycosylase activity releases the damaged DNA base from DNA by cleaving the N-glycosidic bond, leaving an AP site. The AP lyase activity cleaves the phosphodiester bond 3' to the AP site by a beta-elimination. Primarily recognizes and repairs oxidative base damage of pyrimidines. This Gallus gallus (Chicken) protein is Endonuclease III-like protein 1.